The primary structure comprises 148 residues: UPF0758 protein YeeS (148 aa).

Positions 26 to 148 (AFTSTRAARE…VFSFAEHGLL (123 aa)) constitute an MPN domain. Zn(2+) is bound by residues His97, His99, and Asp110. The JAMM motif motif lies at 97–110 (HNHPSGEVTPSKAD).

Belongs to the UPF0758 family.

The protein is UPF0758 protein YeeS (yeeS) of Escherichia coli (strain K12).